The primary structure comprises 393 residues: Protein shisa-9B (393 aa).

Positions 1–20 (MKSTGLLLGYFLMKVLVCDA) are cleaved as a signal peptide. Residues 21-131 (EGEPGKSLDG…MDQHDPTKDK (111 aa)) are Extracellular-facing. Residues 28 to 52 (LDGAVTASGSNDSRDGENGLSETPH) form a disordered region. Residue asparagine 38 is glycosylated (N-linked (GlcNAc...) asparagine). Residues 132–152 (TNLIVYIICGVVAIMALVGIF) traverse the membrane as a helical segment. Residues 153-393 (TKLGLEKAHR…VTNSKTEVTV (241 aa)) lie on the Cytoplasmic side of the membrane. Residues 307–340 (QKQNGHKSKSTKVHSSHPLAYGSNTIANPGRMSS) are disordered. Positions 310–321 (NGHKSKSTKVHS) are enriched in basic residues.

The protein belongs to the shisa family. SHISA9 subfamily. Component of some AMPA receptors (ionotropic glutamate receptors) complex.

The protein resides in the cell projection. It localises to the dendritic spine membrane. The protein localises to the synapse. Its function is as follows. Regulator of short-term neuronal synaptic plasticity in the dentate gyrus. Associates with AMPA receptors (ionotropic glutamate receptors) in synaptic spines and promotes AMPA receptor desensitization at excitatory synapses. The chain is Protein shisa-9B (shisa9b) from Danio rerio (Zebrafish).